The sequence spans 535 residues: CTP synthase (535 aa).

The tract at residues 1-268 is amidoligase domain; the sequence is MSTKYIFVTG…DQIVCDHLKL (268 aa). Ser-14 contributes to the CTP binding site. Residue Ser-14 participates in UTP binding. ATP is bound at residue 15-20; the sequence is SMGKGI. Tyr-55 contributes to the L-glutamine binding site. Asp-72 serves as a coordination point for ATP. 2 residues coordinate Mg(2+): Asp-72 and Glu-142. Residues 149 to 151, 189 to 194, and Lys-225 contribute to the CTP site; these read DME and KTKIAQ. Residues 189-194 and Lys-225 each bind UTP; that span reads KTKIAQ. A Glutamine amidotransferase type-1 domain is found at 293-535; that stretch reads KIALVGKYVE…FIRVAVENSK (243 aa). An L-glutamine-binding site is contributed by Gly-355. The active-site Nucleophile; for glutamine hydrolysis is Cys-382. L-glutamine contacts are provided by residues 383-386, Glu-406, and Arg-464; that span reads LGMQ. Active-site residues include His-509 and Glu-511.

The protein belongs to the CTP synthase family. As to quaternary structure, homotetramer.

It carries out the reaction UTP + L-glutamine + ATP + H2O = CTP + L-glutamate + ADP + phosphate + 2 H(+). The catalysed reaction is L-glutamine + H2O = L-glutamate + NH4(+). The enzyme catalyses UTP + NH4(+) + ATP = CTP + ADP + phosphate + 2 H(+). It participates in pyrimidine metabolism; CTP biosynthesis via de novo pathway; CTP from UDP: step 2/2. Its activity is regulated as follows. Allosterically activated by GTP, when glutamine is the substrate; GTP has no effect on the reaction when ammonia is the substrate. The allosteric effector GTP functions by stabilizing the protein conformation that binds the tetrahedral intermediate(s) formed during glutamine hydrolysis. Inhibited by the product CTP, via allosteric rather than competitive inhibition. Functionally, catalyzes the ATP-dependent amination of UTP to CTP with either L-glutamine or ammonia as the source of nitrogen. Regulates intracellular CTP levels through interactions with the four ribonucleotide triphosphates. This Lactococcus lactis subsp. lactis (strain IL1403) (Streptococcus lactis) protein is CTP synthase.